Here is a 43-residue protein sequence, read N- to C-terminus: MLNYVTSRYLATFLQPLSQKWIAFLLKKIFSKRSSIRKTLPFS.

This is an uncharacterized protein from Schizosaccharomyces pombe (strain 972 / ATCC 24843) (Fission yeast).